A 261-amino-acid chain; its full sequence is 2,3-dihydro-2,3-dihydroxybenzoate dehydrogenase (261 aa).

12-36 provides a ligand contact to NAD(+); sequence FITGAAQGIGEAVARTLASQGAHIA. S144 is a binding site for substrate. The active-site Proton acceptor is Y157.

It belongs to the short-chain dehydrogenases/reductases (SDR) family.

It is found in the cytoplasm. The enzyme catalyses (2S,3S)-2,3-dihydroxy-2,3-dihydrobenzoate + NAD(+) = 2,3-dihydroxybenzoate + NADH + H(+). It functions in the pathway siderophore biosynthesis; bacillibactin biosynthesis. The protein is 2,3-dihydro-2,3-dihydroxybenzoate dehydrogenase (dhbA) of Bacillus subtilis (strain 168).